A 138-amino-acid polypeptide reads, in one-letter code: Histone H2B (138 aa).

The segment covering 1-10 has biased composition (basic and acidic residues); the sequence is MPPKAAEKKP. The interval 1–47 is disordered; that stretch reads MPPKAAEKKPSTAGKAPAGKAPEKKEAGKKTTAAGGEKKKRSKTRKE. K8 and K9 each carry N6-acetyllysine; alternate. Residues K8 and K9 each participate in a glycyl lysine isopeptide (Lys-Gly) (interchain with G-Cter in SUMO); alternate cross-link. Residues 11–20 show a composition bias toward low complexity; sequence STAGKAPAGK. Residue K15 is modified to N6-acetyllysine. Residue K24 is modified to N6-acetyllysine; alternate. K24 participates in a covalent cross-link: Glycyl lysine isopeptide (Lys-Gly) (interchain with G-Cter in SUMO); alternate. K25 participates in a covalent cross-link: Glycyl lysine isopeptide (Lys-Gly) (interchain with G-Cter in SUMO). A Glycyl lysine isopeptide (Lys-Gly) (interchain with G-Cter in ubiquitin) cross-link involves residue K132.

Belongs to the histone H2B family. In terms of assembly, the nucleosome is a histone octamer containing two molecules each of H2A, H2B, H3 and H4 assembled in one H3-H4 heterotetramer and two H2A-H2B heterodimers. The octamer wraps approximately 147 bp of DNA. Monoubiquitinated to form H2BK123ub1. H2BK123ub1 gives a specific tag for epigenetic transcriptional activation and is also prerequisite for H3K4me and H3K79me formation. H2BK123ub1 also modulates the formation of double-strand breaks during meiosis and is a prerequisite for DNA-damage checkpoint activation. Post-translationally, acetylated by GCN5 to form H2BK11ac and H2BK16ac. H2BK16ac can also be formed by ESA1. Acetylation of N-terminal lysines and particularly formation of H2BK11acK16ac has a positive effect on transcription. In terms of processing, sumoylation to form H2BK6su or H2BK7su, and probably also H2BK16su or H2BK17su, occurs preferentially near the telomeres and represses gene transcription.

Its subcellular location is the nucleus. The protein resides in the chromosome. Functionally, core component of nucleosome. Nucleosomes wrap and compact DNA into chromatin, limiting DNA accessibility to the cellular machineries which require DNA as a template. Histones thereby play a central role in transcription regulation, DNA repair, DNA replication and chromosomal stability. DNA accessibility is regulated via a complex set of post-translational modifications of histones, also called histone code, and nucleosome remodeling. The chain is Histone H2B (HTB1) from Ajellomyces capsulatus (Darling's disease fungus).